A 485-amino-acid polypeptide reads, in one-letter code: Glutamyl-tRNA(Gln) amidotransferase subunit A (485 aa).

Active-site charge relay system residues include Lys-78 and Ser-153. Residue Ser-177 is the Acyl-ester intermediate of the active site.

Belongs to the amidase family. GatA subfamily. In terms of assembly, heterotrimer of A, B and C subunits.

The enzyme catalyses L-glutamyl-tRNA(Gln) + L-glutamine + ATP + H2O = L-glutaminyl-tRNA(Gln) + L-glutamate + ADP + phosphate + H(+). In terms of biological role, allows the formation of correctly charged Gln-tRNA(Gln) through the transamidation of misacylated Glu-tRNA(Gln) in organisms which lack glutaminyl-tRNA synthetase. The reaction takes place in the presence of glutamine and ATP through an activated gamma-phospho-Glu-tRNA(Gln). The sequence is that of Glutamyl-tRNA(Gln) amidotransferase subunit A from Geotalea daltonii (strain DSM 22248 / JCM 15807 / FRC-32) (Geobacter daltonii).